The chain runs to 776 residues: Protein translocase subunit SecA 2 (776 aa).

ATP-binding positions include Gln80, Gly98–Thr102, and Asp486.

Belongs to the SecA family. As to quaternary structure, monomer and homodimer. Part of the essential Sec protein translocation apparatus which comprises SecA, SecYEG and auxiliary proteins SecDF. Other proteins may also be involved.

The protein resides in the cell membrane. Its subcellular location is the cytoplasm. The enzyme catalyses ATP + H2O + cellular proteinSide 1 = ADP + phosphate + cellular proteinSide 2.. In terms of biological role, part of the Sec protein translocase complex. Interacts with the SecYEG preprotein conducting channel. Has a central role in coupling the hydrolysis of ATP to the transfer of proteins into and across the cell membrane, serving as an ATP-driven molecular motor driving the stepwise translocation of polypeptide chains across the membrane. The sequence is that of Protein translocase subunit SecA 2 from Listeria monocytogenes serovar 1/2a (strain ATCC BAA-679 / EGD-e).